Consider the following 1638-residue polypeptide: Non-structural polyprotein 1AB (1638 aa).

The stretch at 130–222 (LVHQVMEKTR…KEKENALVSV (93 aa)) forms a coiled coil. Transmembrane regions (helical) follow at residues 220-240 (VSVGWDLLGWIVISVLVFGLI), 379-398 (VMSYRLDMWITSIFSLVLAG), 407-427 (APFIFVAWFLNIPVFLTCVAV), 437-457 (FILFQIFMPQFVLVNAFLLWL), 479-499 (ALVYTIGFVLWSLGLAVGVTL), and 507-527 (ILMFCVVAAAICGTKFACTTI). Catalysis depends on charge relay system; for serine protease activity residues histidine 600, aspartate 632, and serine 697. The stretch at 758 to 788 (KVSHAAILKELEELREEVQFLKKKCVTYDDY) forms a coiled coil. Residue tyrosine 834 is modified to O-(5'-phospho-RNA)-tyrosine. Residues 1381–1515 (RYFVEMDWTR…SIRKGFVEYE (135 aa)) form the RdRp catalytic domain.

It belongs to the astroviridae polyprotein 1AB family. Monomer. Post-translationally, cleaved by the viral and host proteases. The protease is probably autocatalytically cleaved.

Its subcellular location is the host membrane. It carries out the reaction RNA(n) + a ribonucleoside 5'-triphosphate = RNA(n+1) + diphosphate. Functionally, responsible for the cleavage of the polyprotein into functional products. In terms of biological role, protein covalently attached to the 5' extremity of the genomic and subgenomic RNAs. It may serve as a primer for the replicase. The sequence is that of Non-structural polyprotein 1AB (ORF1) from Turkey astrovirus 2 (TAstV-2).